Reading from the N-terminus, the 569-residue chain is Ribonuclease J (569 aa).

Residues His81, His83, Asp85, His86, His150, and Asp172 each coordinate Zn(2+). 373–377 is a binding site for substrate; that stretch reads HASGH. His399 lines the Zn(2+) pocket.

This sequence belongs to the metallo-beta-lactamase superfamily. RNA-metabolizing metallo-beta-lactamase-like family. Bacterial RNase J subfamily. Homodimer, may be a subunit of the RNA degradosome. Zn(2+) is required as a cofactor.

The protein resides in the cytoplasm. Functionally, an RNase that has 5'-3' exonuclease and possibly endoonuclease activity. Involved in maturation of rRNA and in some organisms also mRNA maturation and/or decay. This Mycoplasma genitalium (strain ATCC 33530 / DSM 19775 / NCTC 10195 / G37) (Mycoplasmoides genitalium) protein is Ribonuclease J.